We begin with the raw amino-acid sequence, 602 residues long: Cytokine-like nuclear factor N-PAC (602 aa).

Ser-8 and Ser-10 each carry phosphoserine. One can recognise a PWWP domain in the interval 22–81; sequence PKDLIWAKMKGFTPWPGMIVDPPLDLLSQQRRANTKCVFFFGSRNFAWIEENNIKPFEGP. The disordered stretch occupies residues 162 to 262; that stretch reads GSPDEGDGLD…ASSTPTGRRR (101 aa). Composition is skewed to polar residues over residues 176 to 188, 204 to 217, and 224 to 233; these read ADSS…SPAV, AATS…SAKS, and SAQQSPSGPS. Phosphoserine occurs at positions 224, 228, and 243. A dehydrogenase domain region spans residues 309–602; it reads RDIVPSEQTF…SSAVFVRSRF (294 aa). NAD(+) contacts are provided by residues 319 to 333, Thr-411, and Arg-554; that span reads GFLG…IVKD.

The protein belongs to the HIBADH-related family. NP60 subfamily. Binds to mononucleosomes. Interacts with male-specific lethal (MSL) histone acetyltransferase complex at least composed of mof, msl-1, msl-2 and msl-3.

It localises to the chromosome. In terms of biological role, nucleosome-destabilizing factor that is recruited to genes during transcriptional activation and colocalizes with a subset of trimethylated 'Lys-36' histone H3 (H3K36me3)-enriched regions. Binds DNA (in vitro). Facilitates Pol II transcription through nucleosomes. Facilitates male-specific lethal (MSL) histone acetyltransferase complex targeting to active genes on the X chromosome. Stimulates the acetylation of 'Lys-56' of nucleosomal histone H3 (H3K56ac) by nej. May have oxidoreductase activity. The sequence is that of Cytokine-like nuclear factor N-PAC from Drosophila melanogaster (Fruit fly).